The chain runs to 165 residues: UI (165 aa).

The signal sequence occupies residues 1-18 (MKPVPLILLLATVLLSSH). V163 carries the valine amide modification.

It belongs to the sauvagine/corticotropin-releasing factor/urotensin I family.

Its subcellular location is the secreted. In terms of biological role, urotensin is found in the teleost caudal neurosecretory system. It has a suggested role in osmoregulation and as a corticotropin-releasing factor. The non-hormonal portion of this precursor may be a urotensin binding protein, urophysin. The sequence is that of UI from Oncorhynchus mykiss (Rainbow trout).